The chain runs to 59 residues: MAVPKKRTSMSKKRIRKNIWKKKTYFSIVQSYSLVKSRSFSSGNEHPKPKGFSGQQTNK.

The tract at residues 37 to 59 (SRSFSSGNEHPKPKGFSGQQTNK) is disordered.

It belongs to the bacterial ribosomal protein bL32 family.

The protein resides in the plastid. Its subcellular location is the chloroplast. This is Large ribosomal subunit protein bL32c from Hordeum vulgare (Barley).